Reading from the N-terminus, the 59-residue chain is Small, acid-soluble spore protein H (59 aa).

The protein belongs to the SspH family.

Its subcellular location is the spore core. The polypeptide is Small, acid-soluble spore protein H (Bacillus cereus (strain ZK / E33L)).